The sequence spans 468 residues: Glutamate--tRNA ligase 2 (468 aa).

Positions 9 to 19 match the 'HIGH' region motif; the sequence is PSPTGFLHIGG. The 'KMSKS' region motif lies at 238 to 242; that stretch reads KLSKR. Lys241 is a binding site for ATP.

It belongs to the class-I aminoacyl-tRNA synthetase family. Glutamate--tRNA ligase type 1 subfamily. As to quaternary structure, monomer.

The protein resides in the cytoplasm. It carries out the reaction tRNA(Glu) + L-glutamate + ATP = L-glutamyl-tRNA(Glu) + AMP + diphosphate. In terms of biological role, catalyzes the attachment of glutamate to tRNA(Glu) in a two-step reaction: glutamate is first activated by ATP to form Glu-AMP and then transferred to the acceptor end of tRNA(Glu). The polypeptide is Glutamate--tRNA ligase 2 (Rhodospirillum rubrum (strain ATCC 11170 / ATH 1.1.1 / DSM 467 / LMG 4362 / NCIMB 8255 / S1)).